The sequence spans 160 residues: Small ribosomal subunit protein bS6 (160 aa).

This sequence belongs to the bacterial ribosomal protein bS6 family.

Functionally, binds together with bS18 to 16S ribosomal RNA. The protein is Small ribosomal subunit protein bS6 of Ureaplasma urealyticum serovar 10 (strain ATCC 33699 / Western).